A 357-amino-acid chain; its full sequence is Protein phosphatase 1 regulatory subunit 42 (357 aa).

7 LRR repeats span residues Lys29–Arg50, Asn51–Thr72, Asn73–Lys94, Lys95–Glu116, Glu117–Pro138, Ser147–Glu168, and Asn169–Leu190. The LRRCT domain occupies Asn204–Trp242. Residues Glu329 to Glu357 form a disordered region. The segment covering Asn335 to Glu357 has biased composition (basic and acidic residues).

As to quaternary structure, interacts with PPP1CC isoform gamma-2; the interaction is direct. Interacts with actin, dynein, KIF5B, KIFC1 and tubulin. Associates with microtubules. Phosphorylated; during the first round of spermatogenesis with a marginal increase at 21 days after birth. In terms of tissue distribution, testis-specific. Expressed in spermatids (at protein level). Testis-specific.

It is found in the cytoplasm. The protein localises to the cytoskeleton. It localises to the microtubule organizing center. The protein resides in the centrosome. Functionally, regulates phosphatase activity of protein phosphatase 1 (PP1) complexes in the testis. The polypeptide is Protein phosphatase 1 regulatory subunit 42 (Ppp1r42) (Mus musculus (Mouse)).